Consider the following 355-residue polypeptide: Undecaprenyl-phosphate alpha-N-acetylglucosaminyl 1-phosphate transferase (355 aa).

8 consecutive transmembrane segments (helical) span residues 1–21 (MLSIFVTFLGAFLTLIVMRPL), 39–59 (GTIPLIGGASLFVGNLCYYLM), 63–83 (QLRLPYLYLFSIFVLLAIGIL), 123–143 (FQLTLGSIGLIITVFATIAII), 182–202 (WSFALIVSILPYLMLNLGIPF), 208–228 (VFMGDAGSTLIGFTIIWILLL), 237–257 (MNPVTALWIIAIPLIDMVAII), and 315–335 (WAMFVGFFILFFLYVYSITHA).

It belongs to the glycosyltransferase 4 family. WecA subfamily. Requires Mg(2+) as cofactor. Mn(2+) is required as a cofactor.

Its subcellular location is the cell inner membrane. The enzyme catalyses di-trans,octa-cis-undecaprenyl phosphate + UDP-N-acetyl-alpha-D-glucosamine = N-acetyl-alpha-D-glucosaminyl-di-trans,octa-cis-undecaprenyl diphosphate + UMP. It functions in the pathway bacterial outer membrane biogenesis; LPS O-antigen biosynthesis. Catalyzes the transfer of the GlcNAc-1-phosphate moiety from UDP-GlcNAc onto the carrier lipid undecaprenyl phosphate (C55-P), yielding GlcNAc-pyrophosphoryl-undecaprenyl (GlcNAc-PP-C55). The polypeptide is Undecaprenyl-phosphate alpha-N-acetylglucosaminyl 1-phosphate transferase (Haemophilus influenzae (strain ATCC 51907 / DSM 11121 / KW20 / Rd)).